The following is a 974-amino-acid chain: Serine/threonine-protein kinase 10 (974 aa).

Residues 37-295 (WEIIGELGDG…AAQLLEHPFV (259 aa)) form the Protein kinase domain. Residues 43-51 (LGDGAFGKV) and lysine 66 contribute to the ATP site. Aspartate 158 acts as the Proton acceptor in catalysis. A compositionally biased stretch (acidic residues) spans 320–332 (EDNHEDGEDEDPA). Residues 320–479 (EDNHEDGEDE…EKEDHCEETQ (160 aa)) form a disordered region. Over residues 343–353 (DPSQTSATSLN) the composition is skewed to polar residues. 2 stretches are compositionally biased toward basic and acidic residues: residues 382–406 (PLKE…ESEA) and 458–477 (TMEK…HCEE). Coiled-coil stretches lie at residues 605-729 (QKEQ…EEQK) and 870-950 (EKVK…EHLK).

Belongs to the protein kinase superfamily. STE Ser/Thr protein kinase family. STE20 subfamily. In terms of assembly, homodimer. Autophosphorylates.

Its subcellular location is the cell membrane. It catalyses the reaction L-seryl-[protein] + ATP = O-phospho-L-seryl-[protein] + ADP + H(+). It carries out the reaction L-threonyl-[protein] + ATP = O-phospho-L-threonyl-[protein] + ADP + H(+). Functionally, may act as a polo kinase kinase by mediating phosphorylation of plk1. This Danio rerio (Zebrafish) protein is Serine/threonine-protein kinase 10 (stk10).